We begin with the raw amino-acid sequence, 331 residues long: MSIATEIIGVPETLDHFQSESYSPYHFFSSEQWAKFRADTPLTLTSDEVKRLRSMGDPIDLDEVRRIYLSLSRLLSAHVESSQMLFEQRNRFLSLSDVTKTPFVIGIAGSVAVGKSTTARILKELLGRWPSSPKVDLVTTDGFLHPNAVLQREKLMQRKGFPESYDTGAILRFLSAIKAGRPDVKAPSYSHLVYDVLPDEYKIVDRPDILIFEGINVLQSRDLPAGGKIVPMVSDFFDFSIYIDAAEDEIHNWYVTRFMRLRETAFRDPNSYFHRYASISDAEALEIAEDLWANINLKNLRQNILPTRPRADLILKKGKDHLIEQVALRKL.

109–116 is a binding site for ATP; that stretch reads GSVAVGKS.

The protein belongs to the prokaryotic pantothenate kinase family.

The protein localises to the cytoplasm. The catalysed reaction is (R)-pantothenate + ATP = (R)-4'-phosphopantothenate + ADP + H(+). It participates in cofactor biosynthesis; coenzyme A biosynthesis; CoA from (R)-pantothenate: step 1/5. The polypeptide is Pantothenate kinase (Rhizobium johnstonii (strain DSM 114642 / LMG 32736 / 3841) (Rhizobium leguminosarum bv. viciae)).